We begin with the raw amino-acid sequence, 303 residues long: uncharacterized protein (303 aa).

The region spanning 173 to 300 (KLPELLGQLN…RFTVNGWIRK (128 aa)) is the Fe2OG dioxygenase domain.

Fe(2+) serves as cofactor. Requires L-ascorbate as cofactor.

This is an uncharacterized protein from Synechocystis sp. (strain ATCC 27184 / PCC 6803 / Kazusa).